A 413-amino-acid polypeptide reads, in one-letter code: NADH-quinone oxidoreductase subunit D (413 aa).

Belongs to the complex I 49 kDa subunit family. NDH-1 is composed of 14 different subunits. Subunits NuoB, C, D, E, F, and G constitute the peripheral sector of the complex.

The protein resides in the cell inner membrane. It catalyses the reaction a quinone + NADH + 5 H(+)(in) = a quinol + NAD(+) + 4 H(+)(out). Its function is as follows. NDH-1 shuttles electrons from NADH, via FMN and iron-sulfur (Fe-S) centers, to quinones in the respiratory chain. The immediate electron acceptor for the enzyme in this species is believed to be ubiquinone. Couples the redox reaction to proton translocation (for every two electrons transferred, four hydrogen ions are translocated across the cytoplasmic membrane), and thus conserves the redox energy in a proton gradient. This is NADH-quinone oxidoreductase subunit D from Rhodobacter capsulatus (Rhodopseudomonas capsulata).